The sequence spans 475 residues: Aspartyl/glutamyl-tRNA(Asn/Gln) amidotransferase subunit B (475 aa).

Belongs to the GatB/GatE family. GatB subfamily. Heterotrimer of A, B and C subunits.

It catalyses the reaction L-glutamyl-tRNA(Gln) + L-glutamine + ATP + H2O = L-glutaminyl-tRNA(Gln) + L-glutamate + ADP + phosphate + H(+). It carries out the reaction L-aspartyl-tRNA(Asn) + L-glutamine + ATP + H2O = L-asparaginyl-tRNA(Asn) + L-glutamate + ADP + phosphate + 2 H(+). In terms of biological role, allows the formation of correctly charged Asn-tRNA(Asn) or Gln-tRNA(Gln) through the transamidation of misacylated Asp-tRNA(Asn) or Glu-tRNA(Gln) in organisms which lack either or both of asparaginyl-tRNA or glutaminyl-tRNA synthetases. The reaction takes place in the presence of glutamine and ATP through an activated phospho-Asp-tRNA(Asn) or phospho-Glu-tRNA(Gln). This chain is Aspartyl/glutamyl-tRNA(Asn/Gln) amidotransferase subunit B, found in Bacillus mycoides (strain KBAB4) (Bacillus weihenstephanensis).